The primary structure comprises 814 residues: Spore development regulator umv1 (814 aa).

6 disordered regions span residues 1–36 (MSRP…GSTE), 96–134 (HDRP…VRRG), 267–333 (QGLK…MPRS), 407–441 (PPRD…RAGP), 457–501 (PVRS…ASLT), and 539–814 (QSSG…NQPY). Residues 7–18 (RSGNASTPQGTS) show a composition bias toward polar residues. The region spanning 53 to 274 (RDHIEYQLTV…AEQGLKVRVR (222 aa)) is the Velvet domain. Residues 271–285 (VRVRKHPRSRRRGSK) are compositionally biased toward basic residues. Residues 407–423 (PPRDFADGRYMDGDYPP) are compositionally biased toward basic and acidic residues. Residues 438-445 (RAGPSEYS) carry the Nuclear localization signal motif. Low complexity predominate over residues 620-631 (AAARRSPIPSAR). 2 stretches are compositionally biased toward basic and acidic residues: residues 723–741 (TRDR…DRDQ) and 760–796 (GELD…RRDF). A compositionally biased stretch (polar residues) spans 800 to 814 (TMPSKPSSRGHNQPY).

It belongs to the velvet family. VosA subfamily. Forms a heterodimeric complex with velB; the formation of the VEL2-VOS1 complex is light-dependent.

Its subcellular location is the nucleus. In terms of biological role, component of the velB-VosA heterodimeric complex that plays a dual role in activating genes associated with spore maturation and repressing certain development-associated genes. The complex binds DNA through the DNA-binding domain of vosA that recognizes an 11-nucleotide consensus sequence 5'-CTGGCCGCGGC-3' consisting of two motifs in the promoters of key developmental regulatory genes. Required for gall induction and teliospore formation on seedlings. This Mycosarcoma maydis (Corn smut fungus) protein is Spore development regulator umv1.